A 242-amino-acid polypeptide reads, in one-letter code: Type III pantothenate kinase (242 aa).

An ATP-binding site is contributed by 6 to 13; sequence DAGNTRLK. Substrate-binding positions include Y90 and 97-100; that span reads GADR. The active-site Proton acceptor is D99. D119 lines the K(+) pocket. Residue S122 coordinates ATP. T174 lines the substrate pocket.

Belongs to the type III pantothenate kinase family. In terms of assembly, homodimer. It depends on NH4(+) as a cofactor. K(+) is required as a cofactor.

Its subcellular location is the cytoplasm. It catalyses the reaction (R)-pantothenate + ATP = (R)-4'-phosphopantothenate + ADP + H(+). It participates in cofactor biosynthesis; coenzyme A biosynthesis; CoA from (R)-pantothenate: step 1/5. Functionally, catalyzes the phosphorylation of pantothenate (Pan), the first step in CoA biosynthesis. The polypeptide is Type III pantothenate kinase (Marinobacter nauticus (strain ATCC 700491 / DSM 11845 / VT8) (Marinobacter aquaeolei)).